The following is a 404-amino-acid chain: Activity-regulated cytoskeleton-associated protein (404 aa).

The stretch at 51-78 (EVSKQVERELKGLQKSVGKLENNLEDHV) forms a coiled coil. The tract at residues 351–404 (VQGNMDHSEEPSPQRTPEIQSGDSVESMPPSTTASPVPSNGTQPEPPSPPATVI) is disordered. Polar residues predominate over residues 363-393 (PQRTPEIQSGDSVESMPPSTTASPVPSNGTQ). Positions 394 to 404 (PEPPSPPATVI) are enriched in pro residues.

Belongs to the ARC/ARG3.1 family. In terms of assembly, homooligomer; homooligomerizes into virion-like capsids. Post-translationally, palmitoylation anchors the protein into the membrane by allowing direct insertion into the hydrophobic core of the lipid bilayer. In terms of tissue distribution, expressed at various levels throughout the brain.

The protein localises to the extracellular vesicle membrane. It localises to the postsynaptic cell membrane. The protein resides in the synapse. It is found in the postsynaptic density. Its subcellular location is the early endosome membrane. The protein localises to the cell projection. It localises to the dendrite. The protein resides in the cytoplasm. It is found in the cytoskeleton. Its subcellular location is the cell cortex. The protein localises to the dendritic spine. Functionally, master regulator of synaptic plasticity that self-assembles into virion-like capsids that encapsulate RNAs and mediate intercellular RNA transfer in the nervous system. ARC protein is released from neurons in extracellular vesicles that mediate the transfer of ARC mRNA into new target cells, where ARC mRNA can undergo activity-dependent translation. ARC capsids are endocytosed and are able to transfer ARC mRNA into the cytoplasm of neurons. Acts as a key regulator of synaptic plasticity: required for protein synthesis-dependent forms of long-term potentiation (LTP) and depression (LTD) and for the formation of long-term memory. Regulates synaptic plasticity by promoting endocytosis of AMPA receptors (AMPARs) in response to synaptic activity: this endocytic pathway maintains levels of surface AMPARs in response to chronic changes in neuronal activity through synaptic scaling, thereby contributing to neuronal homeostasis. Acts as a postsynaptic mediator of activity-dependent synapse elimination in the developing cerebellum by mediating elimination of surplus climbing fiber synapses. Accumulates at weaker synapses, probably to prevent their undesired enhancement. This suggests that ARC-containing virion-like capsids may be required to eliminate synaptic material. This Gallus gallus (Chicken) protein is Activity-regulated cytoskeleton-associated protein.